Reading from the N-terminus, the 324-residue chain is Carbamate kinase (324 aa).

This sequence belongs to the carbamate kinase family.

The protein resides in the cytoplasm. It carries out the reaction hydrogencarbonate + NH4(+) + ATP = carbamoyl phosphate + ADP + H2O + H(+). The protein operates within amino-acid degradation; L-arginine degradation via ADI pathway. The chain is Carbamate kinase from Rhizobium meliloti (strain 1021) (Ensifer meliloti).